Consider the following 65-residue polypeptide: Large ribosomal subunit protein bL35 (65 aa).

The protein belongs to the bacterial ribosomal protein bL35 family.

The protein is Large ribosomal subunit protein bL35 of Buchnera aphidicola subsp. Cinara cedri (strain Cc).